A 484-amino-acid polypeptide reads, in one-letter code: Aspartyl/glutamyl-tRNA(Asn/Gln) amidotransferase subunit B (484 aa).

The protein belongs to the GatB/GatE family. GatB subfamily. Heterotrimer of A, B and C subunits.

The enzyme catalyses L-glutamyl-tRNA(Gln) + L-glutamine + ATP + H2O = L-glutaminyl-tRNA(Gln) + L-glutamate + ADP + phosphate + H(+). The catalysed reaction is L-aspartyl-tRNA(Asn) + L-glutamine + ATP + H2O = L-asparaginyl-tRNA(Asn) + L-glutamate + ADP + phosphate + 2 H(+). Its function is as follows. Allows the formation of correctly charged Asn-tRNA(Asn) or Gln-tRNA(Gln) through the transamidation of misacylated Asp-tRNA(Asn) or Glu-tRNA(Gln) in organisms which lack either or both of asparaginyl-tRNA or glutaminyl-tRNA synthetases. The reaction takes place in the presence of glutamine and ATP through an activated phospho-Asp-tRNA(Asn) or phospho-Glu-tRNA(Gln). The chain is Aspartyl/glutamyl-tRNA(Asn/Gln) amidotransferase subunit B from Bordetella parapertussis (strain 12822 / ATCC BAA-587 / NCTC 13253).